The chain runs to 209 residues: Dual-specificity protein phosphatase SDP1 (209 aa).

The segment covering 1-11 has biased composition (polar residues); that stretch reads MNIYTSPTRTP. The tract at residues 1-43 is disordered; it reads MNIYTSPTRTPNIAPKSGQRPSLPMLATDERSTDKESPNEDRE. Over residues 28–43 the composition is skewed to basic and acidic residues; that stretch reads TDERSTDKESPNEDRE. A disulfide bridge connects residues Cys-47 and Cys-142. A Tyrosine-protein phosphatase domain is found at 59 to 196; the sequence is GPLLVLPEKI…LMEWEVALNA (138 aa). Residue His-111 participates in 4-O-phospho-L-tyrosine binding. The active-site Phosphocysteine intermediate is Cys-140.

Belongs to the protein-tyrosine phosphatase family. Non-receptor class dual specificity subfamily.

It carries out the reaction O-phospho-L-tyrosyl-[protein] + H2O = L-tyrosyl-[protein] + phosphate. Functionally, mediates dephosphorylation of MAPK substrates such as SLT2, acquiring enhanced catalytic activity under oxidative conditions. The chain is Dual-specificity protein phosphatase SDP1 (SDP1) from Saccharomyces cerevisiae (strain ATCC 204508 / S288c) (Baker's yeast).